Reading from the N-terminus, the 103-residue chain is Photosystem II 5 kDa protein, chloroplastic (103 aa).

The transit peptide at 1-75 (MASMTMTATF…LAKVAMAEEE (75 aa)) directs the protein to the chloroplast.

Post-translationally, the maturation of the PSII-T precursor to its final form occurs through a two step process. First, a stromal intermediate is formed, which, upon translocation into the thylakoid membrane, is processed to the mature protein.

Its subcellular location is the plastid. The protein localises to the chloroplast thylakoid membrane. Its function is as follows. May be a component of the oxygen-evolving complex. The sequence is that of Photosystem II 5 kDa protein, chloroplastic (PSBT) from Arabidopsis thaliana (Mouse-ear cress).